The chain runs to 142 residues: Prefoldin subunit alpha 2 (142 aa).

The protein belongs to the prefoldin subunit alpha family. In terms of assembly, heterohexamer of two alpha and four beta subunits.

It localises to the cytoplasm. Molecular chaperone capable of stabilizing a range of proteins. Seems to fulfill an ATP-independent, HSP70-like function in archaeal de novo protein folding. The protein is Prefoldin subunit alpha 2 of Thermococcus kodakarensis (strain ATCC BAA-918 / JCM 12380 / KOD1) (Pyrococcus kodakaraensis (strain KOD1)).